The following is a 307-amino-acid chain: Porphobilinogen deaminase (307 aa).

Cys239 bears the S-(dipyrrolylmethanemethyl)cysteine mark.

The protein belongs to the HMBS family. As to quaternary structure, monomer. Dipyrromethane is required as a cofactor.

The enzyme catalyses 4 porphobilinogen + H2O = hydroxymethylbilane + 4 NH4(+). The protein operates within porphyrin-containing compound metabolism; protoporphyrin-IX biosynthesis; coproporphyrinogen-III from 5-aminolevulinate: step 2/4. Tetrapolymerization of the monopyrrole PBG into the hydroxymethylbilane pre-uroporphyrinogen in several discrete steps. The polypeptide is Porphobilinogen deaminase (Campylobacter jejuni subsp. jejuni serotype O:23/36 (strain 81-176)).